An 84-amino-acid polypeptide reads, in one-letter code: Small ribosomal subunit protein bS20 (84 aa).

The protein belongs to the bacterial ribosomal protein bS20 family.

In terms of biological role, binds directly to 16S ribosomal RNA. In Azobacteroides pseudotrichonymphae genomovar. CFP2, this protein is Small ribosomal subunit protein bS20.